Consider the following 234-residue polypeptide: Biosynthetic peptidoglycan transglycosylase (234 aa).

A helical transmembrane segment spans residues 11–31 (RFLLFAMLGFVGLSVLLVLVF).

This sequence belongs to the glycosyltransferase 51 family.

The protein localises to the cell inner membrane. It catalyses the reaction [GlcNAc-(1-&gt;4)-Mur2Ac(oyl-L-Ala-gamma-D-Glu-L-Lys-D-Ala-D-Ala)](n)-di-trans,octa-cis-undecaprenyl diphosphate + beta-D-GlcNAc-(1-&gt;4)-Mur2Ac(oyl-L-Ala-gamma-D-Glu-L-Lys-D-Ala-D-Ala)-di-trans,octa-cis-undecaprenyl diphosphate = [GlcNAc-(1-&gt;4)-Mur2Ac(oyl-L-Ala-gamma-D-Glu-L-Lys-D-Ala-D-Ala)](n+1)-di-trans,octa-cis-undecaprenyl diphosphate + di-trans,octa-cis-undecaprenyl diphosphate + H(+). The protein operates within cell wall biogenesis; peptidoglycan biosynthesis. Peptidoglycan polymerase that catalyzes glycan chain elongation from lipid-linked precursors. This chain is Biosynthetic peptidoglycan transglycosylase, found in Chromohalobacter salexigens (strain ATCC BAA-138 / DSM 3043 / CIP 106854 / NCIMB 13768 / 1H11).